A 183-amino-acid polypeptide reads, in one-letter code: Large ribosomal subunit protein bL27m (183 aa).

The N-terminal 34 residues, methionine 1–tryptophan 34, are a transit peptide targeting the mitochondrion.

This sequence belongs to the bacterial ribosomal protein bL27 family.

The protein localises to the mitochondrion. This chain is Large ribosomal subunit protein bL27m (RPL27), found in Cryptococcus neoformans var. neoformans serotype D (strain B-3501A) (Filobasidiella neoformans).